Consider the following 420-residue polypeptide: UDP-N-acetylglucosamine 1-carboxyvinyltransferase 1 (420 aa).

22-23 (KN) lines the phosphoenolpyruvate pocket. Position 91 (R91) interacts with UDP-N-acetyl-alpha-D-glucosamine. The active-site Proton donor is the C115. C115 carries the 2-(S-cysteinyl)pyruvic acid O-phosphothioketal modification. UDP-N-acetyl-alpha-D-glucosamine-binding positions include 120 to 124 (RPMDL), D303, and V325.

The protein belongs to the EPSP synthase family. MurA subfamily.

It is found in the cytoplasm. The catalysed reaction is phosphoenolpyruvate + UDP-N-acetyl-alpha-D-glucosamine = UDP-N-acetyl-3-O-(1-carboxyvinyl)-alpha-D-glucosamine + phosphate. It functions in the pathway cell wall biogenesis; peptidoglycan biosynthesis. Functionally, cell wall formation. Adds enolpyruvyl to UDP-N-acetylglucosamine. The sequence is that of UDP-N-acetylglucosamine 1-carboxyvinyltransferase 1 from Carboxydothermus hydrogenoformans (strain ATCC BAA-161 / DSM 6008 / Z-2901).